The following is a 162-amino-acid chain: Large ribosomal subunit protein bL17 (162 aa).

A disordered region spans residues 126–162 (KKEEVKTKSRRGGKAKKAEPTTEAPANTTEETTDSAE). A compositionally biased stretch (low complexity) spans 146 to 155 (TTEAPANTTE).

This sequence belongs to the bacterial ribosomal protein bL17 family. In terms of assembly, part of the 50S ribosomal subunit. Contacts protein L32.

In Flavobacterium psychrophilum (strain ATCC 49511 / DSM 21280 / CIP 103535 / JIP02/86), this protein is Large ribosomal subunit protein bL17.